We begin with the raw amino-acid sequence, 330 residues long: MTNTIDSFQKGSALENYNIWIDCDPGHDDVVALTLAACAGHCKILGVSTVHGNTTLEFTTKNALAVMELLNQDVDVHAGAAKPLMRESAFATHIHGTNGLAGISLLPDYPKKKATPDAVFAMYTTISNYPEPVTLVATGPLTNIALLLATYPSVTDNIERFIFMGGSTGIGNITSQAEFNVYADPEAARLVLETKSLIGKLFMVPLDVTHKVLLDANIIQLLRQHSNPFSSTLVELMTVFQQTYENVYGIRNGVPVHDVCAVALALWPSLWTSRSMYVTVSLDSLTLGRTVCDVWSQQNQYPANVHVVLEADVSLFWETFIGVIDRLNYL.

His-257 is an active-site residue.

The protein belongs to the IUNH family.

This is an uncharacterized protein from Schizosaccharomyces pombe (strain 972 / ATCC 24843) (Fission yeast).